Here is a 217-residue protein sequence, read N- to C-terminus: Ribosomal large subunit pseudouridine synthase E (217 aa).

Positions 19–28 (HQVKRFSSQR) are enriched in polar residues. The disordered stretch occupies residues 19-38 (HQVKRFSSQRSTRRKPENQP). Residue aspartate 79 is the Nucleophile of the active site.

This sequence belongs to the pseudouridine synthase RsuA family.

It carries out the reaction uridine(2457) in 23S rRNA = pseudouridine(2457) in 23S rRNA. Responsible for synthesis of pseudouridine from uracil-2457 in 23S ribosomal RNA. The sequence is that of Ribosomal large subunit pseudouridine synthase E (rluE) from Escherichia coli O157:H7.